The primary structure comprises 149 residues: Nucleoside diphosphate kinase (149 aa).

Positions 9, 57, 85, 91, 102, and 112 each coordinate ATP. Catalysis depends on His-115, which acts as the Pros-phosphohistidine intermediate.

Belongs to the NDK family. Homotetramer. It depends on Mg(2+) as a cofactor.

The protein resides in the cytoplasm. The enzyme catalyses a 2'-deoxyribonucleoside 5'-diphosphate + ATP = a 2'-deoxyribonucleoside 5'-triphosphate + ADP. It catalyses the reaction a ribonucleoside 5'-diphosphate + ATP = a ribonucleoside 5'-triphosphate + ADP. Its function is as follows. Major role in the synthesis of nucleoside triphosphates other than ATP. The ATP gamma phosphate is transferred to the NDP beta phosphate via a ping-pong mechanism, using a phosphorylated active-site intermediate. The protein is Nucleoside diphosphate kinase of Cyanothece sp. (strain PCC 7425 / ATCC 29141).